The sequence spans 523 residues: Mediator of RNA polymerase II transcription subunit 1.2 (523 aa).

The protein belongs to the Mediator complex subunit 1 family. As to quaternary structure, component of the Mediator complex.

Its subcellular location is the nucleus. Component of the Mediator complex, a coactivator involved in the regulated transcription of nearly all RNA polymerase II-dependent genes. Mediator functions as a bridge to convey information from gene-specific regulatory proteins to the basal RNA polymerase II transcription machinery. Mediator is recruited to promoters by direct interactions with regulatory proteins and serves as a scaffold for the assembly of a functional preinitiation complex with RNA polymerase II and the general transcription factors. This chain is Mediator of RNA polymerase II transcription subunit 1.2 (mdt-1.2), found in Caenorhabditis briggsae.